The primary structure comprises 909 residues: Epithelial discoidin domain-containing receptor 1 (909 aa).

The N-terminal stretch at 1-18 is a signal peptide; sequence MGPEALSSLLLLLLVASG. The Extracellular portion of the chain corresponds to 21-413; that stretch reads DMKGHFDPAK…VAKAEGSPTA (393 aa). An F5/8 type C domain is found at 31–181; sequence CRYALGMQDR…VCLRVELYGC (151 aa). Disulfide bonds link C31-C181 and C70-C173. Residues 45 to 60 are compositionally biased toward low complexity; it reads SDISASSSWSDSTAAR. Residues 45–65 are disordered; it reads SDISASSSWSDSTAARHSSDG. Residues 188–363 are DS-like domain; it reads LSYTAPVGQT…LFSEISFISD (176 aa). Ca(2+) contacts are provided by N207, Q226, D229, V231, Y249, and Y251. The N-linked (GlcNAc...) asparagine glycan is linked to N207. An N-linked (GlcNAc...) asparagine glycan is attached at N256. C299 and C344 are joined by a disulfide. Ca(2+) is bound by residues S356 and E357. N-linked (GlcNAc...) asparagine glycosylation is found at N366 and N390. The chain crosses the membrane as a helical span at residues 414–434; the sequence is ILIGCLVAIILLLLLIIALML. The Cytoplasmic portion of the chain corresponds to 435 to 909; that stretch reads WRLHWRRLLS…FLAEDALNTV (475 aa). The segment at 466-495 is disordered; that stretch reads ILINNRPGPREPPPYQEPRPRGNPPHSAPC. Positions 475-492 are enriched in pro residues; the sequence is REPPPYQEPRPRGNPPHS. The PPxY motif signature appears at 477–480; that stretch reads PPPY. Y480, Y509, and Y516 each carry phosphotyrosine; by autocatalysis. The 296-residue stretch at 606–901 folds into the Protein kinase domain; that stretch reads LRFKEKLGEG…PPFSQLHRFL (296 aa). ATP is bound at residue 612 to 620; it reads LGEGQFGEV. The residue at position 627 (S627) is a Phosphoserine. K651 serves as a coordination point for ATP. Residue Y736 is modified to Phosphotyrosine; by autocatalysis. D762 functions as the Proton acceptor in the catalytic mechanism. A phosphotyrosine; by autocatalysis mark is found at Y788, Y792, and Y793.

This sequence belongs to the protein kinase superfamily. Tyr protein kinase family. Insulin receptor subfamily. Homodimer. Interacts (via PPxY motif) with WWC1 (via WW domains) in a collagen-regulated manner. Forms a tripartite complex with WWC1 and PRKCZ, but predominantly in the absence of collagen. Interacts (tyrosine phosphorylated) with SHC1. Interacts with SRC. Interacts with MYH9. Interacts with CDH1. Interacts with PTPN11. Interacts with NCK2. In terms of processing, autophosphorylated in response to fibrillar collagen binding.

Its subcellular location is the cell membrane. It catalyses the reaction L-tyrosyl-[protein] + ATP = O-phospho-L-tyrosyl-[protein] + ADP + H(+). In terms of biological role, tyrosine kinase that functions as a cell surface receptor for fibrillar collagen and regulates cell attachment to the extracellular matrix, remodeling of the extracellular matrix, cell migration, differentiation, survival and cell proliferation. Collagen binding triggers a signaling pathway that involves SRC and leads to the activation of MAP kinases. Regulates remodeling of the extracellular matrix by up-regulation of the matrix metalloproteinases MMP2, MMP7 and MMP9, and thereby facilitates cell migration and wound healing. Promotes smooth muscle cell migration, and thereby contributes to arterial wound healing. Also plays a role in tumor cell invasion. Phosphorylates PTPN11. Required for normal blastocyst implantation during pregnancy, for normal mammary gland differentiation and normal lactation. Required for normal ear morphology and normal hearing. This chain is Epithelial discoidin domain-containing receptor 1 (DDR1), found in Pan troglodytes (Chimpanzee).